Here is a 684-residue protein sequence, read N- to C-terminus: DNA ligase (684 aa).

NAD(+) is bound by residues 46–50 (DYVYD), 100–101 (SL), and E130. The N6-AMP-lysine intermediate role is filled by K132. NAD(+)-binding residues include R153, E187, K303, and K327. Residues C421, C424, C439, and C444 each contribute to the Zn(2+) site. The BRCT domain maps to 604 to 684 (DEKNYFFNKR…DFINLSNAKK (81 aa)).

Belongs to the NAD-dependent DNA ligase family. LigA subfamily. Requires Mg(2+) as cofactor. The cofactor is Mn(2+).

The enzyme catalyses NAD(+) + (deoxyribonucleotide)n-3'-hydroxyl + 5'-phospho-(deoxyribonucleotide)m = (deoxyribonucleotide)n+m + AMP + beta-nicotinamide D-nucleotide.. Its function is as follows. DNA ligase that catalyzes the formation of phosphodiester linkages between 5'-phosphoryl and 3'-hydroxyl groups in double-stranded DNA using NAD as a coenzyme and as the energy source for the reaction. It is essential for DNA replication and repair of damaged DNA. The protein is DNA ligase of Oenococcus oeni (strain ATCC BAA-331 / PSU-1).